The sequence spans 297 residues: D-aminoacyl-tRNA deacylase (297 aa).

This sequence belongs to the DtdA deacylase family. Monomer. Zn(2+) is required as a cofactor.

The catalysed reaction is a D-aminoacyl-tRNA + H2O = a tRNA + a D-alpha-amino acid + H(+). It carries out the reaction glycyl-tRNA(Ala) + H2O = tRNA(Ala) + glycine + H(+). Its function is as follows. D-aminoacyl-tRNA deacylase with broad substrate specificity. By recycling D-aminoacyl-tRNA to D-amino acids and free tRNA molecules, this enzyme counteracts the toxicity associated with the formation of D-aminoacyl-tRNA entities in vivo. This is D-aminoacyl-tRNA deacylase from Methanosarcina acetivorans (strain ATCC 35395 / DSM 2834 / JCM 12185 / C2A).